A 954-amino-acid chain; its full sequence is Calsyntenin-1 (954 aa).

The first 25 residues, Met-1–Ala-25, serve as a signal peptide directing secretion. The Extracellular segment spans residues Ala-26 to Ala-833. Cadherin domains lie at Ile-35–Phe-151 and Lys-152–Trp-252. N-linked (GlcNAc...) asparagine glycosylation is found at Asn-333, Asn-353, and Asn-552. Residues Ala-834–Phe-854 traverse the membrane as a helical segment. Topologically, residues Arg-855–Tyr-954 are cytoplasmic. Residues Thr-891 to Tyr-954 form a disordered region. Acidic residues predominate over residues Glu-900–Asp-935.

The protein belongs to the calsyntenin family. In terms of assembly, homooligomer and heterooligomer; mediates both homophilic and heterophilc interactions with clstn2 and clstn3 paralogs via cadherin domains. In terms of tissue distribution, by 48 hours post-fertilization (hpf), widely expressed in the brain, with strong expression in the telencephalon and the midbrain.

It localises to the postsynaptic cell membrane. Its subcellular location is the endoplasmic reticulum membrane. It is found in the golgi apparatus membrane. The protein localises to the cell projection. The protein resides in the neuron projection. Functionally, postsynaptic adhesion molecule involved in vesicle trafficking; required for branching of peripheral but not central axons of sensory neurons. Promotes synapse development by acting as a cell adhesion molecule at the postsynaptic membrane, which associates with presynaptic neurexins. The chain is Calsyntenin-1 from Danio rerio (Zebrafish).